The chain runs to 122 residues: Small ribosomal subunit protein uS13c (122 aa).

Residues arginine 102–lysine 122 form a disordered region.

The protein belongs to the universal ribosomal protein uS13 family. In terms of assembly, part of the 30S ribosomal subunit.

The protein localises to the plastid. Its subcellular location is the chloroplast. Functionally, located at the top of the head of the 30S subunit, it contacts several helices of the 16S rRNA. The polypeptide is Small ribosomal subunit protein uS13c (Guillardia theta (Cryptophyte)).